Reading from the N-terminus, the 900-residue chain is Bifunctional uridylyltransferase/uridylyl-removing enzyme (900 aa).

Residues 1–342 (MPQVDPELFD…PCEQPVQIQP (342 aa)) are uridylyltransferase. Residues 343 to 705 (LNSRFQLRDG…TTQREFESGS (363 aa)) form a uridylyl-removing region. The 123-residue stretch at 461-583 (VDAHTLNLIK…VGDQTHLDYL (123 aa)) folds into the HD domain. 2 consecutive ACT domains span residues 706–789 (QIFI…IIQR) and 816–891 (VLEV…DNGR).

This sequence belongs to the GlnD family. Mg(2+) serves as cofactor.

It carries out the reaction [protein-PII]-L-tyrosine + UTP = [protein-PII]-uridylyl-L-tyrosine + diphosphate. The enzyme catalyses [protein-PII]-uridylyl-L-tyrosine + H2O = [protein-PII]-L-tyrosine + UMP + H(+). Its activity is regulated as follows. Uridylyltransferase (UTase) activity is inhibited by glutamine, while glutamine activates uridylyl-removing (UR) activity. In terms of biological role, modifies, by uridylylation and deuridylylation, the PII regulatory proteins (GlnB and homologs), in response to the nitrogen status of the cell that GlnD senses through the glutamine level. Under low glutamine levels, catalyzes the conversion of the PII proteins and UTP to PII-UMP and PPi, while under higher glutamine levels, GlnD hydrolyzes PII-UMP to PII and UMP (deuridylylation). Thus, controls uridylylation state and activity of the PII proteins, and plays an important role in the regulation of nitrogen assimilation and metabolism. The chain is Bifunctional uridylyltransferase/uridylyl-removing enzyme from Pseudomonas aeruginosa (strain ATCC 15692 / DSM 22644 / CIP 104116 / JCM 14847 / LMG 12228 / 1C / PRS 101 / PAO1).